The primary structure comprises 268 residues: Glutamate racemase (268 aa).

Residues 9 to 10 (DS) and 41 to 42 (YG) each bind substrate. Cys-73 (proton donor/acceptor) is an active-site residue. 74–75 (NS) contributes to the substrate binding site. The active-site Proton donor/acceptor is the Cys-183. 184–185 (TH) lines the substrate pocket.

It belongs to the aspartate/glutamate racemases family.

The enzyme catalyses L-glutamate = D-glutamate. It functions in the pathway cell wall biogenesis; peptidoglycan biosynthesis. Functionally, provides the (R)-glutamate required for cell wall biosynthesis. This chain is Glutamate racemase, found in Shewanella piezotolerans (strain WP3 / JCM 13877).